Here is a 78-residue protein sequence, read N- to C-terminus: Sec-independent protein translocase protein TatA (78 aa).

Residues Met-1–Gly-21 traverse the membrane as a helical segment. Residues Lys-40–Val-78 are disordered. Residues Glu-46–Val-78 are compositionally biased toward basic and acidic residues.

It belongs to the TatA/E family. As to quaternary structure, the Tat system comprises two distinct complexes: a TatABC complex, containing multiple copies of TatA, TatB and TatC subunits, and a separate TatA complex, containing only TatA subunits. Substrates initially bind to the TatABC complex, which probably triggers association of the separate TatA complex to form the active translocon.

The protein localises to the cell inner membrane. In terms of biological role, part of the twin-arginine translocation (Tat) system that transports large folded proteins containing a characteristic twin-arginine motif in their signal peptide across membranes. TatA could form the protein-conducting channel of the Tat system. This is Sec-independent protein translocase protein TatA from Shewanella sediminis (strain HAW-EB3).